We begin with the raw amino-acid sequence, 774 residues long: Protein translocase subunit SecA 2 (774 aa).

ATP contacts are provided by residues Gln-94, 112–116 (GEGKT), and Asp-501.

It belongs to the SecA family. As to quaternary structure, monomer and homodimer. Part of the essential Sec protein translocation apparatus which comprises SecA, SecYEG and auxiliary proteins SecDF. Other proteins may also be involved.

It is found in the cell membrane. Its subcellular location is the cytoplasm. The enzyme catalyses ATP + H2O + cellular proteinSide 1 = ADP + phosphate + cellular proteinSide 2.. In terms of biological role, part of the Sec protein translocase complex. Interacts with the SecYEG preprotein conducting channel. Has a central role in coupling the hydrolysis of ATP to the transfer of proteins into and across the cell membrane, serving as an ATP-driven molecular motor driving the stepwise translocation of polypeptide chains across the membrane. The chain is Protein translocase subunit SecA 2 from Mycobacterium sp. (strain JLS).